The following is a 467-amino-acid chain: ATP-dependent protease ATPase subunit HslU (467 aa).

Residues V22 and G64–E69 each bind ATP. Positions Q149–E192 are disordered. Residues E178 to E192 are compositionally biased toward basic and acidic residues. Residues D280, E345, and R417 each contribute to the ATP site.

Belongs to the ClpX chaperone family. HslU subfamily. A double ring-shaped homohexamer of HslV is capped on each side by a ring-shaped HslU homohexamer. The assembly of the HslU/HslV complex is dependent on binding of ATP.

Its subcellular location is the cytoplasm. ATPase subunit of a proteasome-like degradation complex; this subunit has chaperone activity. The binding of ATP and its subsequent hydrolysis by HslU are essential for unfolding of protein substrates subsequently hydrolyzed by HslV. HslU recognizes the N-terminal part of its protein substrates and unfolds these before they are guided to HslV for hydrolysis. The polypeptide is ATP-dependent protease ATPase subunit HslU (Staphylococcus aureus (strain MW2)).